A 478-amino-acid chain; its full sequence is Proline--tRNA ligase (478 aa).

This sequence belongs to the class-II aminoacyl-tRNA synthetase family. ProS type 3 subfamily. In terms of assembly, homodimer.

Its subcellular location is the cytoplasm. The catalysed reaction is tRNA(Pro) + L-proline + ATP = L-prolyl-tRNA(Pro) + AMP + diphosphate. Catalyzes the attachment of proline to tRNA(Pro) in a two-step reaction: proline is first activated by ATP to form Pro-AMP and then transferred to the acceptor end of tRNA(Pro). This Clostridium novyi (strain NT) protein is Proline--tRNA ligase.